The primary structure comprises 94 residues: Trp operon repressor homolog (94 aa).

A DNA-binding region spans residues 58–81 (QREIAEKYGVSIAQITRGSNALKG).

The protein belongs to the TrpR family. As to quaternary structure, homodimer.

The protein localises to the cytoplasm. This protein is an aporepressor. When complexed with L-tryptophan it binds the operator region of the trp operon and prevents the initiation of transcription. The protein is Trp operon repressor homolog of Chlamydia trachomatis serovar L2 (strain ATCC VR-902B / DSM 19102 / 434/Bu).